Here is a 189-residue protein sequence, read N- to C-terminus: MTEYKLVIVGGGGVGKSALTIQLIQNHFIDEYDPTIEDSYRKQVTIDEETCLLDILDTAGQEEYSAMRDQYMRTGQGFLCVYSITSRSSFDEIASFREQILRVKDKDRVPMIVVGNKCDLESDRQVTTGEGQDLAKSFGSPFLETSAKIRVNVEEAFYSLVREIRKDLKGDSKPEKGKKKRPLKACTLL.

10–17 lines the GTP pocket; sequence GGGGVGKS. An Effector region motif is present at residues 32–40; that stretch reads YDPTIEDSY. Residues 57-61 and 116-119 contribute to the GTP site; these read DTAGQ and NKCD. The segment at 169–189 is disordered; that stretch reads KGDSKPEKGKKKRPLKACTLL. Cys186 carries the cysteine methyl ester modification. A lipid anchor (S-geranylgeranyl cysteine) is attached at Cys186. Positions 187–189 are cleaved as a propeptide — removed in mature form; sequence TLL.

This sequence belongs to the small GTPase superfamily. Ras family. Interacts with ripA.

The protein resides in the cell membrane. The catalysed reaction is GTP + H2O = GDP + phosphate + H(+). Its activity is regulated as follows. Alternates between an inactive form bound to GDP and an active form bound to GTP. Activated by a guanine nucleotide-exchange factor (GEF) and inactivated by a GTPase-activating protein (GAP). Its function is as follows. Ras proteins bind GDP/GTP and possess intrinsic GTPase activity. The polypeptide is Ras-like protein rasG (rasG) (Dictyostelium discoideum (Social amoeba)).